A 179-amino-acid chain; its full sequence is Large ribosomal subunit protein uL5 (179 aa).

It belongs to the universal ribosomal protein uL5 family. Part of the 50S ribosomal subunit; part of the 5S rRNA/L5/L18/L25 subcomplex. Contacts the 5S rRNA and the P site tRNA. Forms a bridge to the 30S subunit in the 70S ribosome.

Functionally, this is one of the proteins that bind and probably mediate the attachment of the 5S RNA into the large ribosomal subunit, where it forms part of the central protuberance. In the 70S ribosome it contacts protein S13 of the 30S subunit (bridge B1b), connecting the 2 subunits; this bridge is implicated in subunit movement. Contacts the P site tRNA; the 5S rRNA and some of its associated proteins might help stabilize positioning of ribosome-bound tRNAs. The protein is Large ribosomal subunit protein uL5 of Thermoanaerobacter sp. (strain X514).